Reading from the N-terminus, the 285-residue chain is Nucleotide-binding protein HI_1146 (285 aa).

8-15 (GRSGAGKS) is an ATP binding site. Residue 56-59 (DIRN) coordinates GTP.

Belongs to the RapZ-like family.

In terms of biological role, displays ATPase and GTPase activities. The protein is Nucleotide-binding protein HI_1146 of Haemophilus influenzae (strain ATCC 51907 / DSM 11121 / KW20 / Rd).